The sequence spans 169 residues: Large ribosomal subunit protein uL15 (169 aa).

The disordered stretch occupies residues 20–56 (GRGIGSGKGKTGGRGVKGQKARSGVSIKGFEGGQMPL). Positions 21–35 (RGIGSGKGKTGGRGV) are enriched in gly residues.

This sequence belongs to the universal ribosomal protein uL15 family. Part of the 50S ribosomal subunit.

In terms of biological role, binds to the 23S rRNA. In Methylorubrum extorquens (strain CM4 / NCIMB 13688) (Methylobacterium extorquens), this protein is Large ribosomal subunit protein uL15.